Reading from the N-terminus, the 159-residue chain is SsrA-binding protein (159 aa).

Residues 133-147 are compositionally biased toward basic and acidic residues; it reads KRQDLAKRDAQREMA. Residues 133–159 form a disordered region; the sequence is KRQDLAKRDAQREMARAAGRRSKGMDD. A compositionally biased stretch (basic residues) spans 150–159; the sequence is AGRRSKGMDD.

The protein belongs to the SmpB family.

It is found in the cytoplasm. In terms of biological role, required for rescue of stalled ribosomes mediated by trans-translation. Binds to transfer-messenger RNA (tmRNA), required for stable association of tmRNA with ribosomes. tmRNA and SmpB together mimic tRNA shape, replacing the anticodon stem-loop with SmpB. tmRNA is encoded by the ssrA gene; the 2 termini fold to resemble tRNA(Ala) and it encodes a 'tag peptide', a short internal open reading frame. During trans-translation Ala-aminoacylated tmRNA acts like a tRNA, entering the A-site of stalled ribosomes, displacing the stalled mRNA. The ribosome then switches to translate the ORF on the tmRNA; the nascent peptide is terminated with the 'tag peptide' encoded by the tmRNA and targeted for degradation. The ribosome is freed to recommence translation, which seems to be the essential function of trans-translation. The polypeptide is SsrA-binding protein (Salinispora arenicola (strain CNS-205)).